The following is a 108-amino-acid chain: Glutaredoxin-1 (108 aa).

Residues 3–106 (EEFVQQRLAN…DILSSIGVLR (104 aa)) form the Glutaredoxin domain. Cys-23 and Cys-26 are oxidised to a cystine.

Belongs to the glutaredoxin family.

It is found in the virion. Displays thioltransferase and dehydroascorbate reductase activities. The sequence is that of Glutaredoxin-1 (OPG075) from Vaccinia virus (strain Copenhagen) (VACV).